A 429-amino-acid polypeptide reads, in one-letter code: Ribosomal RNA small subunit methyltransferase B (429 aa).

Residues 254–260 (CAAPGGK), Asp-277, Asp-303, and Asp-322 contribute to the S-adenosyl-L-methionine site. Residue Cys-375 is the Nucleophile of the active site.

This sequence belongs to the class I-like SAM-binding methyltransferase superfamily. RsmB/NOP family.

The protein localises to the cytoplasm. The enzyme catalyses cytidine(967) in 16S rRNA + S-adenosyl-L-methionine = 5-methylcytidine(967) in 16S rRNA + S-adenosyl-L-homocysteine + H(+). Its function is as follows. Specifically methylates the cytosine at position 967 (m5C967) of 16S rRNA. The protein is Ribosomal RNA small subunit methyltransferase B of Escherichia coli (strain SMS-3-5 / SECEC).